The primary structure comprises 161 residues: Vitamin K-dependent protein C (161 aa).

Residues 1-161 form the Peptidase S1 domain; that stretch reads EKWELDLDIE…GCGLLHNYGV (161 aa). Residue Asn17 is glycosylated (N-linked (GlcNAc...) asparagine). Asp26 (charge relay system) is an active-site residue. Asn82 is a glycosylation site (N-linked (GlcNAc...) asparagine). 2 cysteine pairs are disulfide-bonded: Cys100–Cys114 and Cys125–Cys153. The Charge relay system role is filled by Ser129.

This sequence belongs to the peptidase S1 family. As to expression, plasma; synthesized in the liver.

It localises to the secreted. It is found in the golgi apparatus. The protein localises to the endoplasmic reticulum. It catalyses the reaction Degradation of blood coagulation factors Va and VIIIa.. Its function is as follows. Protein C is a vitamin K-dependent serine protease that regulates blood coagulation by inactivating factors Va and VIIIa in the presence of calcium ions and phospholipids. Exerts a protective effect on the endothelial cell barrier function. The protein is Vitamin K-dependent protein C (PROC) of Macaca mulatta (Rhesus macaque).